The sequence spans 114 residues: Dihydroneopterin monophosphate aldolase (114 aa).

H15, H26, and H28 together coordinate Zn(2+).

It belongs to the PTPS family. The cofactor is Zn(2+).

The catalysed reaction is 7,8-dihydroneopterin 3'-phosphate = glycolaldehyde phosphate + 6-hydroxymethyl-7,8-dihydropterin. Functionally, catalyzes the conversion of 7,8-dihydroneopterin monophosphate (H2NMP) to 6-hydroxymethyl-7,8-dihydropterin (6-HMD). Cannot use 7,8-dihydroneopterin (H2Neo) or 7,8-dihydroneopterin triphosphate (H2NTP) as substrate. The protein is Dihydroneopterin monophosphate aldolase of Pyrococcus furiosus (strain ATCC 43587 / DSM 3638 / JCM 8422 / Vc1).